A 545-amino-acid polypeptide reads, in one-letter code: Oligopeptide-binding protein OppA (545 aa).

The first 20 residues, 1 to 20 (MKKRWSIVTLMLIFTLVLSA), serve as a signal peptide directing secretion. Cysteine 21 carries the N-palmitoyl cysteine lipid modification. Cysteine 21 is lipidated: S-diacylglycerol cysteine. Phosphothreonine is present on threonine 470.

It belongs to the bacterial solute-binding protein 5 family. As to quaternary structure, the complex is composed of two ATP-binding proteins (OppD and OppF), two transmembrane proteins (OppB and OppC) and a solute-binding protein (OppA). OppA interacts with FloT in detergent-resistant membranes (DRM). Colocalizes rarely with FloT membrane assemblies.

It localises to the cell membrane. Its subcellular location is the membrane raft. Its function is as follows. Part of the ABC transporter complex OppABCDF involved in the uptake of oligopeptides. Plays an important nutritional role. Binds peptides containing up to five amino acids residues regardless of their sequence, with highest affinity for tetra- and pentapeptides. Binds to the sporulation-promoting peptide PhrE (Ser-Arg-Asn-Val-Thr). Required for sporulation and genetic competence. This is Oligopeptide-binding protein OppA from Bacillus subtilis (strain 168).